Consider the following 148-residue polypeptide: UPF0756 membrane protein YeaL (148 aa).

4 helical membrane-spanning segments follow: residues 14–34 (ALGF…LIIV), 51–71 (LSIG…SGTL), 86–106 (LVAI…VTLM), and 112–132 (LVAG…GVPV).

This sequence belongs to the UPF0756 family.

It is found in the cell membrane. In Escherichia coli O157:H7, this protein is UPF0756 membrane protein YeaL.